The following is a 104-amino-acid chain: Large ribosomal subunit protein uL24 (104 aa).

It belongs to the universal ribosomal protein uL24 family. In terms of assembly, part of the 50S ribosomal subunit.

One of two assembly initiator proteins, it binds directly to the 5'-end of the 23S rRNA, where it nucleates assembly of the 50S subunit. Functionally, one of the proteins that surrounds the polypeptide exit tunnel on the outside of the subunit. The polypeptide is Large ribosomal subunit protein uL24 (Photobacterium profundum (strain SS9)).